The sequence spans 122 residues: MIQVSTHLEVADNSGARIVKCIKVLGGSRRKYAALGDVIVVSIKEALPGTKVKKGETARAVVVRTAREYQRSDGSYIKFDGNSAVLINKEKEPIGTRIFGPVARELRAKKFMKIISLAPEVL.

Belongs to the universal ribosomal protein uL14 family. As to quaternary structure, part of the 50S ribosomal subunit. Forms a cluster with proteins L3 and L19. In the 70S ribosome, L14 and L19 interact and together make contacts with the 16S rRNA in bridges B5 and B8.

Binds to 23S rRNA. Forms part of two intersubunit bridges in the 70S ribosome. This Sorangium cellulosum (strain So ce56) (Polyangium cellulosum (strain So ce56)) protein is Large ribosomal subunit protein uL14.